Here is a 227-residue protein sequence, read N- to C-terminus: Cytochrome c oxidase subunit 2 (227 aa).

Topologically, residues 1-14 are mitochondrial intermembrane; sequence MAYPFQLGLQDATS. A helical membrane pass occupies residues 15–45; that stretch reads PIMEELLHFHDHTLMIVFLISSLVLYIISLM. At 46 to 59 the chain is on the mitochondrial matrix side; sequence LTTKLTHTSTMDAQ. Residues 60-87 form a helical membrane-spanning segment; the sequence is EVETVWTILPAIILILIALPSLRILYMM. Residues 88 to 227 are Mitochondrial intermembrane-facing; sequence DEINNPSLTV…YFEAWSALMV (140 aa). Residues His161, Cys196, Glu198, Cys200, His204, and Met207 each contribute to the Cu cation site. Glu198 lines the Mg(2+) pocket. The residue at position 218 (Tyr218) is a Phosphotyrosine.

The protein belongs to the cytochrome c oxidase subunit 2 family. Component of the cytochrome c oxidase (complex IV, CIV), a multisubunit enzyme composed of 14 subunits. The complex is composed of a catalytic core of 3 subunits MT-CO1, MT-CO2 and MT-CO3, encoded in the mitochondrial DNA, and 11 supernumerary subunits COX4I, COX5A, COX5B, COX6A, COX6B, COX6C, COX7A, COX7B, COX7C, COX8 and NDUFA4, which are encoded in the nuclear genome. The complex exists as a monomer or a dimer and forms supercomplexes (SCs) in the inner mitochondrial membrane with NADH-ubiquinone oxidoreductase (complex I, CI) and ubiquinol-cytochrome c oxidoreductase (cytochrome b-c1 complex, complex III, CIII), resulting in different assemblies (supercomplex SCI(1)III(2)IV(1) and megacomplex MCI(2)III(2)IV(2)). Found in a complex with TMEM177, COA6, COX18, COX20, SCO1 and SCO2. Interacts with TMEM177 in a COX20-dependent manner. Interacts with COX20. Interacts with COX16. It depends on Cu cation as a cofactor.

The protein localises to the mitochondrion inner membrane. It catalyses the reaction 4 Fe(II)-[cytochrome c] + O2 + 8 H(+)(in) = 4 Fe(III)-[cytochrome c] + 2 H2O + 4 H(+)(out). Its function is as follows. Component of the cytochrome c oxidase, the last enzyme in the mitochondrial electron transport chain which drives oxidative phosphorylation. The respiratory chain contains 3 multisubunit complexes succinate dehydrogenase (complex II, CII), ubiquinol-cytochrome c oxidoreductase (cytochrome b-c1 complex, complex III, CIII) and cytochrome c oxidase (complex IV, CIV), that cooperate to transfer electrons derived from NADH and succinate to molecular oxygen, creating an electrochemical gradient over the inner membrane that drives transmembrane transport and the ATP synthase. Cytochrome c oxidase is the component of the respiratory chain that catalyzes the reduction of oxygen to water. Electrons originating from reduced cytochrome c in the intermembrane space (IMS) are transferred via the dinuclear copper A center (CU(A)) of subunit 2 and heme A of subunit 1 to the active site in subunit 1, a binuclear center (BNC) formed by heme A3 and copper B (CU(B)). The BNC reduces molecular oxygen to 2 water molecules using 4 electrons from cytochrome c in the IMS and 4 protons from the mitochondrial matrix. This is Cytochrome c oxidase subunit 2 (MT-CO2) from Cuon alpinus (Dhole).